Reading from the N-terminus, the 1663-residue chain is Complement C3 (1663 aa).

The first 22 residues, 1-22, serve as a signal peptide directing secretion; the sequence is MGPTSGPSLLLLLLTHLPLALG. Ser-38 and Ser-70 each carry phosphoserine; by FAM20C. An N-linked (GlcNAc...) asparagine glycan is attached at Asn-85. Phosphoserine; by FAM20C is present on residues Ser-297 and Ser-303. Intrachain disulfides connect Cys-559–Cys-816, Cys-627–Cys-662, Cys-693–Cys-720, Cys-694–Cys-727, Cys-707–Cys-728, Cys-873–Cys-1513, Cys-1101–Cys-1158, Cys-1358–Cys-1489, Cys-1389–Cys-1458, Cys-1506–Cys-1511, Cys-1518–Cys-1590, Cys-1537–Cys-1661, and Cys-1637–Cys-1646. Position 672 is a phosphoserine; by FAM20C (Ser-672). In terms of domain architecture, Anaphylatoxin-like spans 693 to 728; that stretch reads CCEDGMRENPMRFSCQRRTRFISLGEACKKVFLDCC. The N-linked (GlcNAc...) asparagine glycan is linked to Asn-939. Residues 954–973 form a disordered region; it reads REGVQKEDIPPADLSDQVPD. At Ser-968 the chain carries Phosphoserine; by FAM20C. The isoglutamyl cysteine thioester (Cys-Gln) cross-link spans 1010–1013; sequence CGEQ. At Ser-1321 the chain carries Phosphoserine; by FAM20C. The 144-residue stretch at 1518 to 1661 folds into the NTR domain; sequence CFIQKSDDKV…FTESMVVFGC (144 aa). At Ser-1573 the chain carries Phosphoserine; by FAM20C. Residue Asn-1617 is glycosylated (N-linked (GlcNAc...) asparagine). The tract at residues 1634–1659 is interaction with CFP/properdin; the sequence is EDECQDEENQKQCQDLGAFTESMVVF.

In absence of complement activation, the C3 precursor is first processed by the removal of 4 Arg residues, forming two chains, beta and alpha, linked by a disulfide bond. In terms of assembly, complement C3b is composed of complement C3b and complement C3 beta chains that are associated via disulfide bonds. Non-enzymatic component of the C5 convertase, also named C4bC2bC3b, composed of the serine protease complement C2b (C2), complement C3b, as well as complement C4b (C4). Non-enzymatic component of the C5 convertase of the alternative complement pathways composed of the serine protease complement CFB and complement C3b. Interacts with CFP; interaction takes place together with CFB in the alternative complement system and allows the complex to become active. Interacts with CR1 (via Sushi 8 and Sushi 9 domains). Interacts with CFH. As to quaternary structure, interacts with CFH. Interacts with CR2. During pregnancy, C3dg exists as a complex (probably a 2:2:2 heterohexamer) with AGT and the proform of PRG2. Interacts with CR2 (via the N-terminal Sushi domains 1 and 2). In terms of assembly, (Microbial infection) C3b interacts with herpes simplex virus 1 (HHV-1) and herpes simplex virus 2 (HHV-2) envelope glycoprotein C; this interaction inhibits the activation of the complement system. As to quaternary structure, (Microbial infection) Interacts with Staphylococcus aureus immunoglobulin-binding protein Sbi; this interaction prevents the association between C3dg and CR2. (Microbial infection) Interacts with Staphylococcus aureus protein Fib. C3 precursor is first processed by the removal of 4 Arg residues, forming two chains, beta and alpha, linked by a disulfide bond. During activation of the complement systems, the alpha chain is cleaved into C3a and C3b by the C3 convertase: C3b stays linked to the beta chain, while C3a is released in the plasma. The alpha chain is cleaved by the serine protease complement C2b component of the C3 convertase to generate C3a and C3b following activation by the classical, lectin and GZMK complement systems. The alpha chain is cleaved by CFB component of the C3 convertase to generate C3a and C3b following activation by the alternative complement system. Post-translationally, C3a is further processed by carboxypeptidases to release the C-terminal arginine residue generating the acylation stimulating protein (ASP). Levels of ASP are increased in adipocytes in the postprandial period and by insulin and dietary chylomicrons. In terms of processing, complement C3b is rapidly split in two positions by factor I (CFI) and a cofactor (CFH) to form iC3b (inactivated C3b) and C3f which is released. CFI and CFH catalyze proteolytic degradation of already-deposited complement C3b. Then iC3b is slowly cleaved (possibly by CFI) to form C3c (beta chain + alpha' chain fragment 1 + alpha' chain fragment 2), C3dg and C3f. Other proteases produce other fragments such as C3d or C3g. Upon activation, the internal thioester bond reacts with carbohydrate antigens on the target surface to form amide or ester bonds, leading to covalent association with the surface of pathogens. Post-translationally, complement C3b interacts with complement C4b via a thioester linkage. In terms of processing, phosphorylated by FAM20C in the extracellular medium. (Microbial infection) C3 is cleaved by Staphylococcus aureus aureolysin; this cleavage renders C3a and C3b inactive. C3b is rapidly degraded by host factors CFH and CFI preventing its deposition on the bacterial surface while C3a is further inactivated by aureolysin. Post-translationally, (Microbial infection) Complement C3 beta chain is cleaved and inactivated by S.pyogenes SpeB. In terms of processing, (Microbial infection) Cleaved by N.meningitidis NalP between Leu-744 and Gly-745, generating a slightly shorter C3 alpha form and a slightly longer C3 beta form. The C3b-like fragment is degraded in the presence of the complement regulators CFH and CFI, preventing its deposition on the bacterial surface. As to expression, plasma. In terms of tissue distribution, produced in adipocytes and released into the plasma during both the fasting and postprandial periods.

Its subcellular location is the secreted. It is found in the cell surface. Complement activation is inhibited by VSIG4. Precursor of non-enzymatic components of the classical, alternative, lectin and GZMK complement pathways, which consist in a cascade of proteins that leads to phagocytosis and breakdown of pathogens and signaling that strengthens the adaptive immune system. Its function is as follows. Non-enzymatic component of C5 convertase. Generated following cleavage by C3 convertase, it covalently attaches to the surface of pathogens, where it acts as an opsonin that marks the surface of antigens for removal. Complement C3b binds covalently via its reactive thioester, to cell surface carbohydrates or immune aggregates. Together with complement C4b, it then recruits the serine protease complement C2b to form the C5 convertase, which cleaves and activate C5, the next component of the complement pathways. In the alternative complement pathway, recruits the serine protease CFB to form the C5 convertase that cleaves and activates C5. In terms of biological role, mediator of local inflammatory process released following cleavage by C3 convertase. Acts by binding to its receptor, C3AR1, activating G protein-coupled receptor signaling, promoting the phosphorylation, ARRB2-mediated internalization and endocytosis of C3AR1. C3a anaphylatoxin stimulates the activation of immune cells such as mast cells and basophilic leukocytes to release inflammation agents, such as cytokines, chemokines and histamine, which promote inflammation development. Also acts as potent chemoattractant for the migration of macrophages and neutrophils to the inflamed tissues, resulting in neutralization of the inflammatory triggers by multiple ways, such as phagocytosis and generation of reactive oxidants. Functionally, adipogenic hormone that stimulates triglyceride synthesis and glucose transport in adipocytes, regulating fat storage and playing a role in postprandial triglyceride clearance. Appears to stimulate triglyceride synthesis via activation of the PLC, MAPK and AKT signaling pathways. Acts by binding to its receptor, C5AR2, activating G protein-coupled receptor signaling, promoting the phosphorylation, ARRB2-mediated internalization and endocytosis of C5AR2. Acts as a chemoattractant for neutrophils in chronic inflammation. The sequence is that of Complement C3 from Homo sapiens (Human).